Consider the following 268-residue polypeptide: Undecaprenyl-diphosphatase (268 aa).

Transmembrane regions (helical) follow at residues 5–25 (SIIS…IPVS), 43–63 (GNTF…LVYF), 84–104 (FSVL…HGFI), 106–126 (AVLF…GVIL), 184–204 (AAEF…TLDL), 213–233 (FDDI…GIVV), and 248–268 (PFAI…WLVG).

This sequence belongs to the UppP family.

It localises to the cell inner membrane. It carries out the reaction di-trans,octa-cis-undecaprenyl diphosphate + H2O = di-trans,octa-cis-undecaprenyl phosphate + phosphate + H(+). In terms of biological role, catalyzes the dephosphorylation of undecaprenyl diphosphate (UPP). Confers resistance to bacitracin. The protein is Undecaprenyl-diphosphatase of Sinorhizobium fredii (strain NBRC 101917 / NGR234).